Here is a 357-residue protein sequence, read N- to C-terminus: MKRGSEEIKEETSPLPAKHFQRREVSIAEDIGIPIDLMVEILKKLPAKSLIKFQCVSKQWSSIIGSSRDFIDSIVTRSLSQPSRDILISFSTTLTNSLKQISSSFPLRTLDILTKNQSYTEAAIYNPTTRQSLSLPETTAGHSHVSTSFLGYDPFKNQYKVICLDNYKRRCCHVFTLGDAIRKWRKIQYNFGLYFPLLPPVCIKGTIYYQAKQYGSTYVLLCFDVISEKFDQVEAPKTMMDHRYTLINYQGKLGFMCCQNRVEIWVMKNDEKKQEWSKIFFYEMAGFEKWHIARATPSGEIVFVNRLLLSCQTLYVYYYGPKRNSMRRVEVEGTKYRRKHLVHICPVPDHVENTMRL.

The 47-residue stretch at 27 to 73 (IAEDIGIPIDLMVEILKKLPAKSLIKFQCVSKQWSSIIGSSRDFIDS) folds into the F-box domain.

The sequence is that of Putative F-box protein At5g50220 from Arabidopsis thaliana (Mouse-ear cress).